The chain runs to 534 residues: Thromboxane-A synthase (534 aa).

Residues 1 to 10 (MEVLGFLSPE) are Cytoplasmic-facing. A helical transmembrane segment spans residues 11–31 (LNGPMVTMALAVVLLALLKWY). At 32–75 (STSAFSRLEKLGIRHPKPSPFIGNLTFFRQGFWESHMELRKQYG) the chain is on the lumenal side. The chain crosses the membrane as a helical span at residues 76–96 (PLSGYYLGRRMIVVISDPDMI). Topologically, residues 97–223 (KQVLAEKFSN…RRFFAFSVPR (127 aa)) are cytoplasmic. A helical membrane pass occupies residues 224 to 244 (LILVLILSFPSIMVPLARILP). Residues 245 to 336 (NKKRDEVNGF…LTVDEVVGQA (92 aa)) are Lumenal-facing. A helical membrane pass occupies residues 337–357 (FLFLIAGYEIITNTLSFVTYL). Topologically, residues 358 to 534 (LATNPDCQEK…NGVYIRIVPR (177 aa)) are cytoplasmic. C480 contributes to the heme binding site.

Belongs to the cytochrome P450 family. In terms of assembly, monomer. Heme serves as cofactor. Expressed in lung, kidney and thymus.

Its subcellular location is the endoplasmic reticulum membrane. The catalysed reaction is prostaglandin H2 = thromboxane A2. It catalyses the reaction prostaglandin H2 = (12S)-hydroxy-(5Z,8E,10E)-heptadecatrienoate + malonaldehyde. The enzyme catalyses a hydroperoxyeicosatetraenoate = an oxoeicosatetraenoate + H2O. It carries out the reaction (15S)-hydroperoxy-(5Z,8Z,11Z,13E)-eicosatetraenoate = 15-oxo-(5Z,8Z,11Z,13E)-eicosatetraenoate + H2O. The catalysed reaction is (15S)-hydroperoxy-(5Z,8Z,11Z,13E)-eicosatetraenoate + AH2 = (15S)-hydroxy-(5Z,8Z,11Z,13E)-eicosatetraenoate + A + H2O. In terms of biological role, catalyzes the conversion of prostaglandin H2 (PGH2) to thromboxane A2 (TXA2), a potent inducer of blood vessel constriction and platelet aggregation. Also cleaves PGH2 to 12-hydroxy-heptadecatrienoicacid (12-HHT) and malondialdehyde, which is known to act as a mediator of DNA damage. 12-HHT and malondialdehyde are formed stoichiometrically in the same amounts as TXA2. Additionally, displays dehydratase activity, toward (15S)-hydroperoxy-(5Z,8Z,11Z,13E)-eicosatetraenoate (15(S)-HPETE) producing 15-KETE and 15-HETE. This chain is Thromboxane-A synthase (TBXAS1), found in Sus scrofa (Pig).